The chain runs to 684 residues: 1,4-alpha-glucan-branching enzyme (684 aa).

Positions 88 and 123 each coordinate (1,4-alpha-D-glucosyl)n. D340 serves as the catalytic Nucleophile. E395 acts as the Proton donor in catalysis.

It belongs to the glycosyl hydrolase 13 family. GlgB subfamily.

It localises to the cytoplasm. The enzyme catalyses Transfers a segment of a (1-&gt;4)-alpha-D-glucan chain to a primary hydroxy group in a similar glucan chain.. It participates in glycan biosynthesis; glycogen biosynthesis. In terms of biological role, glycogen-branching enzyme participates in the glycogen biosynthetic process along with glycogenin and glycogen synthase. Generates alpha-1,6-glucosidic branches from alpha-1,4-linked glucose chains, to increase solubility of the glycogen polymer. The polypeptide is 1,4-alpha-glucan-branching enzyme (be1) (Emericella nidulans (strain FGSC A4 / ATCC 38163 / CBS 112.46 / NRRL 194 / M139) (Aspergillus nidulans)).